Reading from the N-terminus, the 439-residue chain is Skin secretory protein xP2 (439 aa).

An N-terminal signal peptide occupies residues 1–22 (MNHKLFCVHFLLLILSVCYIQG). Positions 25–351 (AGGEPAPAEG…VEVGPKTEDC (327 aa)) are disordered. 5 repeat units span residues 26–33 (GGEPAPAE), 34–41 (GVAPAPAE), 42–51 (GGAPAPAPAE), 52–59 (GEAPAPAE), and 60–69 (GGAPAPAPAE). Residues 26 to 343 (GGEPAPAEGV…APAPAPAPVE (318 aa)) are 33 X approximate repeats of G-G(0,1)-[EV](0,1)-A-P-[A-P](1,3)-A-E. A compositionally biased stretch (low complexity) spans 26–345 (GGEPAPAEGV…APAPAPVEVG (320 aa)). Residues 70–77 (GAEPAPAD) form a 6; approximate repeat. Repeat copies occupy residues 78–87 (GGAPAPAPAE), 88–97 (GGAPAPAPAE), 98–107 (GGAPAPAPAE), 108–115 (GGAPAPAE), 116–125 (GGAPAPAPAE), 126–135 (GEAPAPAPAE), 136–145 (GEAPAPAPAE), 146–153 (GEAPAPAE), and 154–163 (GEAPAPAPAE). The stretch at 164 to 173 (VEAPAPAPAE) is one 16; approximate repeat. Repeat copies occupy residues 174-183 (GEAPAPAPAE), 184-193 (GEAPAPAPAE), 194-203 (GEAPAPAPAE), 204-215 (GEAPAPAPAPAE), 216-225 (GEAPAPAPAE), 226-235 (GEAPAPAPAE), 236-245 (GEAPAPAPAE), 246-255 (GEAPAPAPAE), 256-265 (GEAPAPAPAE), 266-275 (GEAPAPAPAE), 276-285 (GEAPAPAPAE), 286-293 (GEAPAPAE), 294-303 (GEAPAPAPAE), and 304-313 (GEAPAPAPAE). One copy of the 31; approximate repeat lies at 314–321 (GGAPSPAE). One copy of the 32; approximate repeat lies at 322-331 (GGAPAAAPAE). The stretch at 332–343 (GGAPAPAPAPVE) is one 33; approximate repeat. P-type domains are found at residues 349 to 392 (EDCK…FFPR) and 396 to 439 (AQCL…FHQK). Cystine bridges form between C351-C377, C361-C376, C371-C388, C398-C424, C408-C423, and C418-C435.

Skin.

It is found in the secreted. May act as a growth factor in the germinal layer of the epidermis. May also be involved in growth of regenerating glands and in protection of the skin from the external environment. The protein is Skin secretory protein xP2 (p2) of Xenopus laevis (African clawed frog).